Consider the following 125-residue polypeptide: Multifunctional methyltransferase subunit TRM112-like protein (125 aa).

Residues 2–119 (KLLTHNLLSS…SRGIPNMLLS (118 aa)) form the TRM112 domain. 2 positions are modified to phosphoserine: serine 119 and serine 125.

It belongs to the TRM112 family. In terms of assembly, part of the heterodimeric BUD23-TRM112 methyltransferase complex; this heterodimerization is necessary for the metabolic stability and activity of the catalytic subunit BUD23. Part of the heterodimeric N6AMT1-TRM112 methyltransferase complex; this heterodimerization is necessary for S-adenosyl-L-methionine-binding to N6AMT1/HEMK2. Part of the heterodimeric ALKBH8-TRM112 methyltransferase complex. Part of the heterodimeric METTL5-TRM112 methyltransferase complex; this heterodimerization is necessary for the stability of the catalytic subunit METTL5. Part of the heterodimeric THUMPD3-TRM112 methyltransferase complex; this complex forms an active tRNA methyltransferase, where TRMT112 acts as an activator of the catalytic subunit THUMPD3. Part of the heterodimeric THUMPD2-TRM112 methyltransferase complex; this complex forms an active tRNA methyltransferase, where TRMT112 acts as an activator of the catalytic subunit THUMPD2. Part of the heterodimeric TRMT11-TRM112 methyltransferase complex; this complex forms an active tRNA methyltransferase, where TRMT112 acts as an activator of the catalytic subunit TRMT11.

Its subcellular location is the nucleus. The protein resides in the nucleoplasm. It is found in the cytoplasm. The protein localises to the perinuclear region. Functionally, acts as an activator of both rRNA/tRNA and protein methyltransferases. Together with methyltransferase BUD23, methylates the N(7) position of a guanine in 18S rRNA. The heterodimer with N6AMT1/HEMK2 catalyzes N5-methylation of ETF1 on 'Gln-185', using S-adenosyl L-methionine as methyl donor. The heterodimer with N6AMT1/HEMK2 also monomethylates 'Lys-12' of histone H4 (H4K12me1). The heterodimer with ALKBH8 catalyzes the methylation of 5-carboxymethyl uridine to 5-methylcarboxymethyl uridine at the wobble position of the anticodon loop in target tRNA species. Together with methyltransferase THUMPD3, catalyzes the formation of N(2)-methylguanosine at position 6 in a broad range of tRNA substrates and at position 7 of tRNA(Trp). Involved in the pre-rRNA processing steps leading to small-subunit rRNA production. Together with methyltransferase METTL5, specifically methylates the 6th position of adenine in position 1832 of 18S rRNA. The sequence is that of Multifunctional methyltransferase subunit TRM112-like protein from Homo sapiens (Human).